The primary structure comprises 535 residues: Prolyl 4-hydroxylase subunit alpha-2 (535 aa).

The first 21 residues, 1-21 (MKLWVSALLMAWFGVLSCVQA), serve as a signal peptide directing secretion. N-linked (GlcNAc...) asparagine glycosylation is present at Asn115. The stretch at 207-240 (SQVLDYLSYAVFQLGDLHRALELTRRLLSLDPSH) is one TPR repeat. The N-linked (GlcNAc...) asparagine glycan is linked to Asn264. Residues 412-520 (TAELLQVANY…KWVSNKWFHE (109 aa)) enclose the Fe2OG dioxygenase domain. Positions 430 and 432 each coordinate Fe cation. Lys480 is subject to N6-succinyllysine. Position 501 (His501) interacts with Fe cation. 2-oxoglutarate is bound at residue Lys511.

Belongs to the P4HA family. Heterotetramer of two alpha-2 chains and two beta chains (P4HB) (the beta chain is the multi-functional PDI), where P4HB plays the role of a structural subunit; this tetramer catalyzes the formation of 4-hydroxyproline in collagen. The cofactor is Fe(2+). L-ascorbate is required as a cofactor. In terms of tissue distribution, expressed in the heart, placenta, lung and pancreas.

Its subcellular location is the endoplasmic reticulum lumen. The catalysed reaction is L-prolyl-[collagen] + 2-oxoglutarate + O2 = trans-4-hydroxy-L-prolyl-[collagen] + succinate + CO2. Its activity is regulated as follows. Inhibited by poly(L-proline) only at very high concentrations. Its function is as follows. Catalyzes the post-translational formation of 4-hydroxyproline in -Xaa-Pro-Gly- sequences in collagens and other proteins. In Homo sapiens (Human), this protein is Prolyl 4-hydroxylase subunit alpha-2 (P4HA2).